A 449-amino-acid polypeptide reads, in one-letter code: Acetolactate synthase small subunit 1, chloroplastic (449 aa).

The N-terminal 30 residues, 1–30, are a transit peptide targeting the chloroplast; sequence MEHIQTRTTLSQLSTLPSDKRLGAIRFKCL. 2 ACT domains span residues 31–98 and 259–333; these read LVMK…DLSK and TLSM…DITH.

It belongs to the acetolactate synthase small subunit family. The acetolactate synthase complex contains both large catalytic subunits and small regulatory subunits.

It localises to the plastid. It is found in the chloroplast. Its pathway is amino-acid biosynthesis; L-isoleucine biosynthesis; L-isoleucine from 2-oxobutanoate: step 1/4. The protein operates within amino-acid biosynthesis; L-valine biosynthesis; L-valine from pyruvate: step 1/4. Its function is as follows. Regulatory subunit of acetohydroxy-acid synthase. Probably involved in feedback inhibition by branched-chain amino acids. Not involved in herbicide tolerance. The polypeptide is Acetolactate synthase small subunit 1, chloroplastic (Nicotiana plumbaginifolia (Leadwort-leaved tobacco)).